The sequence spans 218 residues: Oxaloacetate decarboxylase, mitochondrial (218 aa).

Residues 1–18 (MNKFWETGRKIVAVGRNY) constitute a mitochondrion transit peptide. Mg(2+)-binding residues include Glu-63, Glu-65, and Asp-94.

It belongs to the FAH family. As to quaternary structure, homodimer. It depends on Mg(2+) as a cofactor. Mn(2+) serves as cofactor.

It localises to the mitochondrion. It is found in the cytoplasm. Its subcellular location is the cytosol. The catalysed reaction is a 3-acylpyruvate + H2O = a carboxylate + pyruvate + H(+). It carries out the reaction acetylpyruvate + H2O = acetate + pyruvate + H(+). The enzyme catalyses 3-fumarylpyruvate + H2O = fumarate + pyruvate + H(+). It catalyses the reaction oxaloacetate + H(+) = pyruvate + CO2. Functionally, mitochondrial protein that acts as an oxaloacetate decarboxylase (ODx), catalyzing the decarboxylation of oxaloacetate (OAA) to pyruvate and CO(2), and as such is likely a regulatory enzyme in the TCA cycle. Also displays acylpyruvase activity, being able to hydrolyze acetylpyruvate and fumarylpyruvate in vitro. This chain is Oxaloacetate decarboxylase, mitochondrial (fahd1), found in Dictyostelium discoideum (Social amoeba).